The primary structure comprises 512 residues: Pantothenate transporter FEN2 (512 aa).

The Cytoplasmic segment spans residues 1-27; that stretch reads MMKESKSITQHEVERESVSSKRAIKKR. Residues 28–48 traverse the membrane as a helical segment; sequence LLLFKIDLFVLSFVCLQYWIN. At 49 to 79 the chain is on the extracellular side; that stretch reads YVDRVGFTNAYISGMKEDLKMVGNDLTVSNT. Residues 80–100 form a helical membrane-spanning segment; the sequence is VFMIGYIVGMVPNNLMLLCVP. Topologically, residues 101–102 are cytoplasmic; it reads PR. Residues 103 to 123 form a helical membrane-spanning segment; it reads IWLSFCTFAWGLLTLGMYKVT. Topologically, residues 124–132 are extracellular; that stretch reads SFKHICAIR. The chain crosses the membrane as a helical span at residues 133-153; that stretch reads FFQALFESCTFSGTHFVLGSW. Topologically, residues 154–164 are cytoplasmic; the sequence is YKEDELPIRSA. A helical membrane pass occupies residues 165-185; that stretch reads IFTGSGLVGSMFSGFMQTSIF. Residues 186–198 lie on the Extracellular side of the membrane; sequence THLNGRNGLAGWR. Residues 199–219 form a helical membrane-spanning segment; the sequence is WLFIIDFCITLPIAIYGFIFF. At 220-271 the chain is on the cytoplasmic side; that stretch reads PGLPDQTSAVSKFSMTRYIFNEQELHYARRRLPARDESTRLDWSTIPRVLKR. Residues 272-292 traverse the membrane as a helical segment; sequence WHWWMFSLVWVLGGENLGFAS. The Extracellular portion of the chain corresponds to 293-312; it reads NSTFALWLQNQKYTLAQRNN. A helical membrane pass occupies residues 313-333; that stretch reads YPSGIFAVGIVSTLCSAVYMS. At 334-342 the chain is on the cytoplasmic side; it reads KIPRARHWH. The helical transmembrane segment at 343-363 threads the bilayer; the sequence is VSVFISLVMVIVAVLIRADPL. The Extracellular portion of the chain corresponds to 364–372; the sequence is NPKVVFSAQ. A helical transmembrane segment spans residues 373-393; it reads YLGGVAYAGQAVFFSWANIIC. The Cytoplasmic portion of the chain corresponds to 394-401; the sequence is HADLQERA. The chain crosses the membrane as a helical span at residues 402-422; sequence IVLASMNMFSGAVNAWWSILF. Topologically, residues 423-434 are extracellular; sequence FASDMVPKFERG. The helical transmembrane segment at 435–455 threads the bilayer; sequence CYALLATAISSGIVSVVIRSL. At 456 to 512 the chain is on the cytoplasmic side; it reads QIKENLSKKQVPYIDANDMPGEDDDDDNQDNENDGDDESMEVELHNEEMAEISNPFR. A disordered region spans residues 468–512; that stretch reads YIDANDMPGEDDDDDNQDNENDGDDESMEVELHNEEMAEISNPFR. Residues 475–496 show a composition bias toward acidic residues; the sequence is PGEDDDDDNQDNENDGDDESME.

The protein belongs to the major facilitator superfamily. Allantoate permease family.

It localises to the cell membrane. In terms of biological role, transports pantothenate into the cell. Also involved in the catabolite repression-mediated regulation of ergosterol biosynthesis and in fenpropimorph resistance. In Saccharomyces cerevisiae (strain ATCC 204508 / S288c) (Baker's yeast), this protein is Pantothenate transporter FEN2 (FEN2).